An 810-amino-acid polypeptide reads, in one-letter code: Phospholipase D alpha 1 (810 aa).

A propeptide spanning residues 1–36 is cleaved from the precursor; that stretch reads MAQHLLHGTLHATIYEVDDLHTGGLRSGFFGKILAN. The C2 domain occupies 1–126; the sequence is MAQHLLHGTL…IHGEEVDQWV (126 aa). Aspartate 187 is a binding site for Ca(2+). The 40-residue stretch at 327–366 folds into the PLD phosphodiesterase 1 domain; it reads AMFTHHQKIVVVDSEMPSRGGSQMRRIVSFVGGIDLCDGR. Residues histidine 332, lysine 334, and aspartate 339 contribute to the active site. Residue histidine 332 participates in a 1,2-diacyl-sn-glycero-3-phosphate binding. Ca(2+) is bound by residues histidine 372 and histidine 406. A 1,2-diacyl-sn-glycero-3-phosphate contacts are provided by glutamine 522 and histidine 661. The PLD phosphodiesterase 2 domain occupies 656 to 683; that stretch reads FMIYVHTKMMIVDDEYIIIGSANINQRS. Catalysis depends on residues histidine 661, lysine 663, and aspartate 668. Glutamate 722 serves as a coordination point for Ca(2+).

This sequence belongs to the phospholipase D family. C2-PLD subfamily. Ca(2+) serves as cofactor.

The protein localises to the cytoplasm. Its subcellular location is the membrane. The enzyme catalyses a 1,2-diacyl-sn-glycero-3-phosphocholine + H2O = a 1,2-diacyl-sn-glycero-3-phosphate + choline + H(+). Functionally, hydrolyzes glycerol-phospholipids at the terminal phosphodiesteric bond. Plays an important role in various cellular processes, including phytohormone action, vesicular trafficking, secretion, cytoskeletal arrangement, meiosis, tumor promotion, pathogenesis, membrane deterioration and senescence. In Brassica oleracea var. capitata (Cabbage), this protein is Phospholipase D alpha 1 (PLD1).